The chain runs to 128 residues: Azurin (128 aa).

In terms of domain architecture, Plastocyanin-like spans 1-128; that stretch reads AECSVDIQGN…ALMKGTLTLK (128 aa). Cysteines 3 and 26 form a disulfide. Residues His46, Cys112, His117, and Met121 each contribute to the Cu cation site.

Its subcellular location is the periplasm. Functionally, transfers electrons from cytochrome c551 to cytochrome oxidase. This chain is Azurin, found in Pseudomonas aeruginosa.